The following is a 32-amino-acid chain: Conotoxin Cltx-4 (32 aa).

4 positions are modified to 4-hydroxyproline: Pro2, Pro24, Pro28, and Pro30. Ser32 is modified (serine amide).

Post-translationally, contains 4 disulfide bonds. As to expression, expressed by the venom duct.

Its subcellular location is the secreted. The protein is Conotoxin Cltx-4 of Californiconus californicus (California cone).